Here is a 405-residue protein sequence, read N- to C-terminus: Amino acid transporter AVT1I (405 aa).

Transmembrane regions (helical) follow at residues 22-42 (CFNA…YSLA), 46-66 (WLSL…SLLI), 93-113 (IIVS…FLIL), 140-160 (FMAT…LSVL), 169-189 (LATT…GIGF), 201-221 (IPTA…LPTL), 234-254 (VLLI…VLGY), 278-298 (VAIY…ITPT), 318-338 (LLIS…LPFF), 343-363 (SLVG…LCYL), and 377-397 (IMLF…TYIA).

The protein belongs to the amino acid/polyamine transporter 2 family. Amino acid/auxin permease (AAAP) (TC 2.A.18.5) subfamily.

It is found in the membrane. The sequence is that of Amino acid transporter AVT1I from Arabidopsis thaliana (Mouse-ear cress).